A 366-amino-acid chain; its full sequence is Mitochondrial division protein fszB (366 aa).

Residues 70–74, 157–159, Glu190, and Asp238 contribute to the GTP site; these read GGGGN and GTG.

This sequence belongs to the FtsZ family.

Its subcellular location is the mitochondrion. Probably involved in mitochondrion division process. Binds to and hydrolyzes GTP. The polypeptide is Mitochondrial division protein fszB (fszB) (Dictyostelium discoideum (Social amoeba)).